The chain runs to 348 residues: Nuclear receptor subfamily 1 group I member 3 (348 aa).

The segment at residues 8-83 (LRNCVVCGDQ…AGMRKDMILS (76 aa)) is a DNA-binding region (nuclear receptor). The NR C4-type zinc-finger motif lies at 11–31 (CVVCGDQATGYHFNALTCEGC). T38 bears the Phosphothreonine; by PKC mark. The segment at 47–71 (CPFAGSCEVSKTQRRHCPACRLQKC) adopts an NR C4-type zinc-finger fold. Positions 109 to 348 (EQEELIRTLL…MMPLLQEICS (240 aa)) constitute an NR LBD domain.

Belongs to the nuclear hormone receptor family. NR1 subfamily. Heterodimer of NR1I3 and RXR. Interacts with PSMC4. Interacts with ECT2. Directly interacts with DNAJC7; this complex may also include HSP90. Interacts with CRY1. Interacts with CRY2 in a ligand-dependent manner. Phosphorylated at Thr-38 by PKC, dephosphorylation of Thr-38 is required for nuclear translocation and activation.

It localises to the nucleus. The protein localises to the cytoplasm. Its subcellular location is the cytoskeleton. Its function is as follows. Binds and transactivates the retinoic acid response elements that control expression of the retinoic acid receptor beta 2 and alcohol dehydrogenase 3 genes. Transactivates both the phenobarbital responsive element module of the human CYP2B6 gene and the CYP3A4 xenobiotic response element. The protein is Nuclear receptor subfamily 1 group I member 3 (NR1I3) of Pan troglodytes (Chimpanzee).